The sequence spans 481 residues: Proline--tRNA ligase (481 aa).

This sequence belongs to the class-II aminoacyl-tRNA synthetase family. ProS type 3 subfamily. As to quaternary structure, homodimer.

The protein localises to the cytoplasm. The enzyme catalyses tRNA(Pro) + L-proline + ATP = L-prolyl-tRNA(Pro) + AMP + diphosphate. Functionally, catalyzes the attachment of proline to tRNA(Pro) in a two-step reaction: proline is first activated by ATP to form Pro-AMP and then transferred to the acceptor end of tRNA(Pro). The polypeptide is Proline--tRNA ligase (Chlorobium phaeovibrioides (strain DSM 265 / 1930) (Prosthecochloris vibrioformis (strain DSM 265))).